The following is a 195-amino-acid chain: Inhibitor of glycogen debranching 1 (195 aa).

A compositionally biased stretch (polar residues) spans Met-1–Glu-18. Residues Met-1 to Phe-101 form a disordered region. Ser-64 carries the phosphoserine modification. Residue Thr-65 is modified to Phosphothreonine. Positions Glu-75–Ser-95 are enriched in basic and acidic residues. Ser-95 and Ser-96 each carry phosphoserine. Thr-132 is subject to Phosphothreonine. Positions Asn-146 to Ser-175 are disordered. The segment covering Tyr-148–Ser-157 has biased composition (polar residues). Ser-164 carries the post-translational modification Phosphoserine.

In terms of assembly, interacts with GDB1.

The protein localises to the cytoplasm. Acts as an inhibitor of GDB1, enhancing the ability of cells to store glucose as glycogen. The sequence is that of Inhibitor of glycogen debranching 1 (IGD1) from Saccharomyces cerevisiae (strain ATCC 204508 / S288c) (Baker's yeast).